The sequence spans 246 residues: Sulfate transporter CysZ (246 aa).

Helical transmembrane passes span 24–44 (LFVLIPLTLNLLVFALLIGFA), 69–89 (IVWPLFVLLVLVIVFFTFTMV), 148–168 (LLVLSFVPGVNLIATPLWILF), and 214–234 (LLIPLVNLVMMPAAVAGATLF).

The protein belongs to the CysZ family.

It is found in the cell inner membrane. Its function is as follows. High affinity, high specificity proton-dependent sulfate transporter, which mediates sulfate uptake. Provides the sulfur source for the cysteine synthesis pathway. The chain is Sulfate transporter CysZ from Pseudomonas aeruginosa (strain LESB58).